Reading from the N-terminus, the 158-residue chain is Transcription elongation factor GreA (158 aa).

A coiled-coil region spans residues 53–73; sequence EQQGMVEARIRDIEAKLSNAQ.

It belongs to the GreA/GreB family.

Functionally, necessary for efficient RNA polymerase transcription elongation past template-encoded arresting sites. The arresting sites in DNA have the property of trapping a certain fraction of elongating RNA polymerases that pass through, resulting in locked ternary complexes. Cleavage of the nascent transcript by cleavage factors such as GreA or GreB allows the resumption of elongation from the new 3'terminus. GreA releases sequences of 2 to 3 nucleotides. The chain is Transcription elongation factor GreA from Pseudomonas aeruginosa (strain ATCC 15692 / DSM 22644 / CIP 104116 / JCM 14847 / LMG 12228 / 1C / PRS 101 / PAO1).